The following is a 213-amino-acid chain: NADH-quinone oxidoreductase subunit C (213 aa).

The protein belongs to the complex I 30 kDa subunit family. In terms of assembly, NDH-1 is composed of 14 different subunits. Subunits NuoB, C, D, E, F, and G constitute the peripheral sector of the complex.

The protein resides in the cell inner membrane. The enzyme catalyses a quinone + NADH + 5 H(+)(in) = a quinol + NAD(+) + 4 H(+)(out). Its function is as follows. NDH-1 shuttles electrons from NADH, via FMN and iron-sulfur (Fe-S) centers, to quinones in the respiratory chain. The immediate electron acceptor for the enzyme in this species is believed to be ubiquinone. Couples the redox reaction to proton translocation (for every two electrons transferred, four hydrogen ions are translocated across the cytoplasmic membrane), and thus conserves the redox energy in a proton gradient. In Rhodospirillum rubrum (strain ATCC 11170 / ATH 1.1.1 / DSM 467 / LMG 4362 / NCIMB 8255 / S1), this protein is NADH-quinone oxidoreductase subunit C.